The primary structure comprises 118 residues: Holo-[acyl-carrier-protein] synthase (118 aa).

The Mg(2+) site is built by Asp8 and Glu58.

This sequence belongs to the P-Pant transferase superfamily. AcpS family. The cofactor is Mg(2+).

Its subcellular location is the cytoplasm. It catalyses the reaction apo-[ACP] + CoA = holo-[ACP] + adenosine 3',5'-bisphosphate + H(+). Functionally, transfers the 4'-phosphopantetheine moiety from coenzyme A to a Ser of acyl-carrier-protein. This chain is Holo-[acyl-carrier-protein] synthase, found in Streptococcus pyogenes serotype M28 (strain MGAS6180).